We begin with the raw amino-acid sequence, 143 residues long: uncharacterized protein (143 aa).

C12 is an active-site residue.

It belongs to the ArsC family.

This is an uncharacterized protein from Rhodospirillum rubrum.